The following is a 329-amino-acid chain: MTTVSINKPNLLKFKHVKSFQPQEKDCGPVTSLNFDDNGQFLLTSSSNDTMQLYSATNCKFLDTIASKKYGCHSAIFTHAQNECIYSSTMKNFDIKYLNLETNQYLRYFSGHGALVNDLKMNPVNDTFLSSSYDESVRLWDLKISKPQVIIPSLVPNCIAYDPSGLVFALGNPENFEIGLYNLKKIQEGPFLIIKINDATFSQWNKLEFSNNGKYLLVGSSIGKHLIFDAFTGQQLFELIGTRAFPMREFLDSGSACFTPDGEFVLGTDYDGRIAIWNHSDSISNKVLRPQGFIPCVSHETCPRSIAFNPKYSMFVTADETVDFYVYDE.

WD repeat units follow at residues 25 to 64, 111 to 150, 152 to 191, 199 to 238, 246 to 287, and 298 to 328; these read KDCGPVTSLNFDDNGQFLLTSSSNDTMQLYSATNCKFLDT, GHGALVNDLKMNPVNDTFLSSSYDESVRLWDLKISKPQVI, PSLVPNCIAYDPSGLVFALGNPENFEIGLYNLKKIQEGPF, ATFSQWNKLEFSNNGKYLLVGSSIGKHLIFDAFTGQQLFE, PMRE…SNKV, and SHETCPRSIAFNPKYSMFVTADETVDFYVYD.

The protein belongs to the WD repeat SWD2 family. In terms of assembly, component of the Set1C/COMPASS complex which consists of SET1(2), BRE2(2), SPP1(2), SDC1(1), SHG1(1), SWD1(1), SWD2(1), and SWD3(1). Component of the cleavage and polyadenylation factor (CPF) complex, which is composed of PTI1, SYC1, SSU72, GLC7, MPE1, REF2, PFS2, PTA1, YSH1/BRR5, SWD2, CFT2/YDH1, YTH1, CFT1/YHH1, FIP1 and PAP1. Component of the APT complex, which is a subcomplex of CPF, and is composed of PTI1, SYC1, SSU72, GLC7, REF2, PTA1 and SWD2.

It localises to the nucleus. The protein resides in the chromosome. Its subcellular location is the telomere. Functionally, the COMPASS (Set1C) complex specifically mono-, di- and trimethylates histone H3 to form H3K4me1/2/3, which subsequently plays a role in telomere length maintenance and transcription elongation regulation. Its function is as follows. Involved in mediating RNA polymerase II termination. Component of the cleavage and polyadenylation factor (CPF) complex, which plays a key role in polyadenylation-dependent pre-mRNA 3'-end formation and cooperates with cleavage factors including the CFIA complex and NAB4/CFIB. Component of the APT complex, which may be involved in polyadenylation-independent transcript 3'-end formation. The sequence is that of COMPASS component SWD2 (SWD2) from Saccharomyces cerevisiae (strain ATCC 204508 / S288c) (Baker's yeast).